The chain runs to 415 residues: Cell wall mannoprotein PIR3 (415 aa).

The first 18 residues, 1-18 (MQYKKPLVVSALAATSLA), serve as a signal peptide directing secretion. The propeptide occupies 19–67 (AYAPKDPWSTLTPSATYKGGITDYSSSFGIAIEAVATSASSVASSKAKR). 13 PIR1/2/3 repeats span residues 66–84 (KRAA…TTTA), 92–109 (AAAV…AKST), 110–127 (AAAA…AKST), 128–145 (AAAV…AKST), 146–163 (AAAV…AKST), 164–181 (AAAV…AKST), 182–199 (AAAV…AKST), 200–217 (AAAA…AKST), 218–235 (AAAA…AKST), 236–253 (AAAA…AKST), 254–271 (AAAA…TTST), 272–288 (KAAA…ASKT), and 289–307 (TSGA…AEVK).

It belongs to the PIR protein family. Post-translationally, covalently linked to beta-1,3-glucan of the inner cell wall layer via an alkali-sensitive ester linkage between the gamma-carboxyl group of glutamic acids, arising from specific glutamines within the PIR1/2/3 repeats, and hydroxyl groups of glucoses of beta-1,3-glucan chains. In terms of processing, O-glycosylated. Extensively O-mannosylated.

It is found in the secreted. The protein resides in the cell wall. Component of the outer cell wall layer. Required for stability of the cell wall and for optimal growth. Required for resistance against several antifungal and cell wall-perturbing agents. The protein is Cell wall mannoprotein PIR3 (PIR3) of Saccharomyces cerevisiae (strain YJM789) (Baker's yeast).